Reading from the N-terminus, the 431-residue chain is Tol-Pal system protein TolB (431 aa).

The first 26 residues, 1-26 (MRLMTKLGFRALVASCLIAAGGAANA), serve as a signal peptide directing secretion. Positions 411-431 (PQILSVQGGSVREPSWGPFMQ) are disordered.

Belongs to the TolB family. The Tol-Pal system is composed of five core proteins: the inner membrane proteins TolA, TolQ and TolR, the periplasmic protein TolB and the outer membrane protein Pal. They form a network linking the inner and outer membranes and the peptidoglycan layer.

It is found in the periplasm. Functionally, part of the Tol-Pal system, which plays a role in outer membrane invagination during cell division and is important for maintaining outer membrane integrity. This is Tol-Pal system protein TolB from Burkholderia ambifaria (strain MC40-6).